A 398-amino-acid polypeptide reads, in one-letter code: Lysophospholipid transporter LplT (398 aa).

12 helical membrane-spanning segments follow: residues 16–36, 53–73, 91–111, 139–159, 163–183, 195–213, 227–247, 253–273, 286–306, 310–330, 344–364, and 372–392; these read MIAV…LLFA, ILQM…GQVA, AGAL…LVGV, LMEA…GILA, IVAA…ANLY, SWTP…VVLW, LFWG…PVAL, ATPT…AGAA, MPAG…TTLF, ALLL…NALL, IAVQ…LYSL, and VVGV…ALWL.

The protein belongs to the major facilitator superfamily. LplT (TC 2.A.1.42) family.

It localises to the cell inner membrane. Functionally, catalyzes the facilitated diffusion of 2-acyl-glycero-3-phosphoethanolamine (2-acyl-GPE) into the cell. The chain is Lysophospholipid transporter LplT from Serratia proteamaculans (strain 568).